A 141-amino-acid chain; its full sequence is Transcription antitermination protein NusB (141 aa).

Belongs to the NusB family.

Its function is as follows. Involved in transcription antitermination. Required for transcription of ribosomal RNA (rRNA) genes. Binds specifically to the boxA antiterminator sequence of the ribosomal RNA (rrn) operons. In Neisseria meningitidis serogroup A / serotype 4A (strain DSM 15465 / Z2491), this protein is Transcription antitermination protein NusB.